The primary structure comprises 189 residues: MTNAVYLASASPRRKELLTQLGIEFTQFSVDADESQLPNELPYDYVERLARLKAQSGVALGYTDRPVLGSDTVVVIDNQSLGKPCDENDFTHTLKRLSGNTHQVLTAVAFATTDKVLSCVVSTNVTFKTLSDDEIHTYWQSGEPQDKAGGYGIQGLGGRFVTHISGSYFAVVGLPLYETEQLLQTFLRG.

Asp71 serves as the catalytic Proton acceptor.

It belongs to the Maf family. YhdE subfamily. A divalent metal cation is required as a cofactor.

It is found in the cytoplasm. The catalysed reaction is dTTP + H2O = dTMP + diphosphate + H(+). The enzyme catalyses UTP + H2O = UMP + diphosphate + H(+). In terms of biological role, nucleoside triphosphate pyrophosphatase that hydrolyzes dTTP and UTP. May have a dual role in cell division arrest and in preventing the incorporation of modified nucleotides into cellular nucleic acids. The polypeptide is dTTP/UTP pyrophosphatase (Pseudoalteromonas translucida (strain TAC 125)).